The following is a 307-amino-acid chain: Transcription initiation factor IIB 2 (307 aa).

The TFIIB-type zinc-finger motif lies at 7–38; that stretch reads TPKRCPECNSEHLIRDYEHGELICADCGAVIE. Residues Cys11, Cys14, Cys30, and Cys33 each contribute to the Zn(2+) site. A run of 2 repeats spans residues 124–207 and 218–299.

It belongs to the TFIIB family.

Its function is as follows. Stabilizes TBP binding to an archaeal box-A promoter. Also responsible for recruiting RNA polymerase II to the pre-initiation complex (DNA-TBP-TFIIB). The protein is Transcription initiation factor IIB 2 of Thermoplasma acidophilum (strain ATCC 25905 / DSM 1728 / JCM 9062 / NBRC 15155 / AMRC-C165).